An 89-amino-acid polypeptide reads, in one-letter code: Small ribosomal subunit protein uS15 (89 aa).

The protein belongs to the universal ribosomal protein uS15 family. As to quaternary structure, part of the 30S ribosomal subunit. Forms a bridge to the 50S subunit in the 70S ribosome, contacting the 23S rRNA.

Functionally, one of the primary rRNA binding proteins, it binds directly to 16S rRNA where it helps nucleate assembly of the platform of the 30S subunit by binding and bridging several RNA helices of the 16S rRNA. Forms an intersubunit bridge (bridge B4) with the 23S rRNA of the 50S subunit in the ribosome. The chain is Small ribosomal subunit protein uS15 from Aliivibrio fischeri (strain ATCC 700601 / ES114) (Vibrio fischeri).